Consider the following 273-residue polypeptide: Glutamate racemase (273 aa).

Substrate is bound by residues 19 to 20 (DS) and 51 to 52 (YG). Cysteine 83 serves as the catalytic Proton donor/acceptor. 84 to 85 (NT) contributes to the substrate binding site. The active-site Proton donor/acceptor is cysteine 198. 199–200 (TH) lines the substrate pocket.

This sequence belongs to the aspartate/glutamate racemases family.

It catalyses the reaction L-glutamate = D-glutamate. It functions in the pathway cell wall biogenesis; peptidoglycan biosynthesis. In terms of biological role, provides the (R)-glutamate required for cell wall biosynthesis. This chain is Glutamate racemase, found in Agrobacterium fabrum (strain C58 / ATCC 33970) (Agrobacterium tumefaciens (strain C58)).